The primary structure comprises 214 residues: Probable nicotinate-nucleotide adenylyltransferase (214 aa).

It belongs to the NadD family.

It carries out the reaction nicotinate beta-D-ribonucleotide + ATP + H(+) = deamido-NAD(+) + diphosphate. It functions in the pathway cofactor biosynthesis; NAD(+) biosynthesis; deamido-NAD(+) from nicotinate D-ribonucleotide: step 1/1. In terms of biological role, catalyzes the reversible adenylation of nicotinate mononucleotide (NaMN) to nicotinic acid adenine dinucleotide (NaAD). This is Probable nicotinate-nucleotide adenylyltransferase from Buchnera aphidicola subsp. Acyrthosiphon pisum (strain 5A).